Reading from the N-terminus, the 142-residue chain is MKTFVAKPETVKRDWYVVDATGKTLGRLATELARRLRGKHKAEYTPHVDTGDYIIVINADKVAVTGRKETDKLYYWHTGYVGGIKQATFKEMIARRPEAVIEIAVKGMLPKGPLGRAMFRKLKVYAGAEHQHAAQQPQVLDI.

The protein belongs to the universal ribosomal protein uL13 family. As to quaternary structure, part of the 50S ribosomal subunit.

This protein is one of the early assembly proteins of the 50S ribosomal subunit, although it is not seen to bind rRNA by itself. It is important during the early stages of 50S assembly. The sequence is that of Large ribosomal subunit protein uL13 from Haemophilus influenzae (strain 86-028NP).